Consider the following 494-residue polypeptide: NAD(P)H-quinone oxidoreductase subunit 2 B, chloroplastic (494 aa).

13 consecutive transmembrane segments (helical) span residues 6–26 (LLLFHGGSIFPECILILGLIL), 39–59 (TPWFYFISLTSLVMSITVLLF), 81–101 (IFRFLILLCSTLCIPLSVEYI), 106–126 (MAITEFLLFLLTAALGGMVLC), 131–151 (LVTIFVALECFSLCSYLLSGY), 166–186 (LLMGGASSSILVYGFSWLYGL), 211–231 (ILIALISIAVGIGFKLSLVPF), 277–297 (WHLLLEILAILSMILGNLIAI), 305–325 (MLAYSSMGQIGYIIIGIIAGD), 336–356 (YMLFYIFMNLGTFACIVLFGL), 377–397 (AFSLALCLLSLGGIPPLAGFF), 413–433 (LLVSIGPLMSVISIYYYLKII), and 468–488 (MIVCVTASTTLGIVMNPIIAI).

Belongs to the complex I subunit 2 family. In terms of assembly, NDH is composed of at least 16 different subunits, 5 of which are encoded in the nucleus.

It localises to the plastid. The protein localises to the chloroplast thylakoid membrane. It catalyses the reaction a plastoquinone + NADH + (n+1) H(+)(in) = a plastoquinol + NAD(+) + n H(+)(out). The enzyme catalyses a plastoquinone + NADPH + (n+1) H(+)(in) = a plastoquinol + NADP(+) + n H(+)(out). Functionally, NDH shuttles electrons from NAD(P)H:plastoquinone, via FMN and iron-sulfur (Fe-S) centers, to quinones in the photosynthetic chain and possibly in a chloroplast respiratory chain. The immediate electron acceptor for the enzyme in this species is believed to be plastoquinone. Couples the redox reaction to proton translocation, and thus conserves the redox energy in a proton gradient. This is NAD(P)H-quinone oxidoreductase subunit 2 B, chloroplastic from Cycas taitungensis (Prince sago).